The sequence spans 156 residues: Transcriptional repressor NrdR (156 aa).

A zinc finger spans residues 3–34; it reads CPFCGNIDTQVKDSRPAEDHVSIRRRRFCPAC. One can recognise an ATP-cone domain in the interval 49–139; that stretch reads LVVIKTSGKR…VYKNFQAADD (91 aa).

Belongs to the NrdR family. It depends on Zn(2+) as a cofactor.

Its function is as follows. Negatively regulates transcription of bacterial ribonucleotide reductase nrd genes and operons by binding to NrdR-boxes. This chain is Transcriptional repressor NrdR, found in Ruegeria pomeroyi (strain ATCC 700808 / DSM 15171 / DSS-3) (Silicibacter pomeroyi).